A 209-amino-acid polypeptide reads, in one-letter code: Urease accessory protein UreG (209 aa).

Position 10-17 (10-17 (GPVGSGKT)) interacts with GTP.

It belongs to the SIMIBI class G3E GTPase family. UreG subfamily. Homodimer. UreD, UreF and UreG form a complex that acts as a GTP-hydrolysis-dependent molecular chaperone, activating the urease apoprotein by helping to assemble the nickel containing metallocenter of UreC. The UreE protein probably delivers the nickel.

Its subcellular location is the cytoplasm. In terms of biological role, facilitates the functional incorporation of the urease nickel metallocenter. This process requires GTP hydrolysis, probably effectuated by UreG. The sequence is that of Urease accessory protein UreG from Lysinibacillus sphaericus (strain C3-41).